Reading from the N-terminus, the 199-residue chain is Glycerol-3-phosphate acyltransferase (199 aa).

The next 5 helical transmembrane spans lie at 5–25, 54–74, 82–102, 114–134, and 154–174; these read AYLL…IIFC, AAIG…LIAF, AIGL…FFQF, VFFS…LIVF, and YIWC…CLLI.

This sequence belongs to the PlsY family. In terms of assembly, probably interacts with PlsX.

It is found in the cell inner membrane. The catalysed reaction is an acyl phosphate + sn-glycerol 3-phosphate = a 1-acyl-sn-glycero-3-phosphate + phosphate. Its pathway is lipid metabolism; phospholipid metabolism. Catalyzes the transfer of an acyl group from acyl-phosphate (acyl-PO(4)) to glycerol-3-phosphate (G3P) to form lysophosphatidic acid (LPA). This enzyme utilizes acyl-phosphate as fatty acyl donor, but not acyl-CoA or acyl-ACP. The chain is Glycerol-3-phosphate acyltransferase from Haemophilus ducreyi (strain 35000HP / ATCC 700724).